The chain runs to 497 residues: Cytochrome P450 71A12 (497 aa).

A helical transmembrane segment spans residues 4–24 (ILMVSLCLTTLITLFLLKQFL). Cysteine 439 serves as a coordination point for heme.

The protein belongs to the cytochrome P450 family. The cofactor is heme.

It is found in the membrane. In terms of biological role, converts indole-3-acetaldoxime to indole cyanohydrin. Involved in the biosynthetic pathway to 4-hydroxyindole-3-carbonyl nitrile (4-OH-ICN), a cyanogenic metabolite required for inducible pathogen defense. The chain is Cytochrome P450 71A12 (CYP71A12) from Arabidopsis thaliana (Mouse-ear cress).